Reading from the N-terminus, the 205-residue chain is Ribosomal RNA small subunit methyltransferase G (205 aa).

S-adenosyl-L-methionine is bound by residues Gly76, Leu81, 127-128 (IE), and Arg140.

It belongs to the methyltransferase superfamily. RNA methyltransferase RsmG family.

Its subcellular location is the cytoplasm. It catalyses the reaction guanosine(527) in 16S rRNA + S-adenosyl-L-methionine = N(7)-methylguanosine(527) in 16S rRNA + S-adenosyl-L-homocysteine. Its function is as follows. Specifically methylates the N7 position of guanine in position 527 of 16S rRNA. This Francisella tularensis subsp. novicida (strain U112) protein is Ribosomal RNA small subunit methyltransferase G.